Reading from the N-terminus, the 341-residue chain is Putative gustatory receptor 9a (341 aa).

Residue methionine 1 is a topological domain, cytoplasmic. Residues 2–22 form a helical membrane-spanning segment; it reads SLWLEHFLTGYFQLCGLVCGW. Topologically, residues 23–30 are extracellular; the sequence is SGSRLGRL. Residues 31 to 51 form a helical membrane-spanning segment; that stretch reads LSSTFLVLILIELVGEIETYF. The Cytoplasmic segment spans residues 52–68; that stretch reads TEENPDNESVPAYFAKV. The helical transmembrane segment at 69–89 threads the bilayer; it reads IMGVNMAYKMIHAWIALSALF. Over 90–113 the chain is Extracellular; sequence ECRRFRYLLEELPPVKATSFIYRH. The helical transmembrane segment at 114–134 threads the bilayer; that stretch reads LILEIILFACNAFLVLSEYTI. The Cytoplasmic portion of the chain corresponds to 135 to 202; that stretch reads RGIYLENLRY…LAKVTRSLSH (68 aa). A helical membrane pass occupies residues 203-223; the sequence is LFGLSLLLLNVLCLGDWIIVC. At 224 to 233 the chain is on the extracellular side; that stretch reads NVYFMVAYLQ. A helical membrane pass occupies residues 234–254; sequence VLPATLFLFGQVMFVVCPTLI. Residues 255–318 are Cytoplasmic-facing; it reads KIWSICAASH…GIYHLNLQTL (64 aa). A helical transmembrane segment spans residues 319–339; that stretch reads AGMFFFILEALVIFLQFVSLV. Residues 340 to 341 lie on the Extracellular side of the membrane; the sequence is RT.

Belongs to the insect chemoreceptor superfamily. Gustatory receptor (GR) family. Gr2a subfamily. As to expression, expressed in neurons of the terminal external chemosensory organ of larvae.

It is found in the cell membrane. Functionally, probable gustatory receptor which mediates acceptance or avoidance behavior, depending on its substrates. The protein is Putative gustatory receptor 9a (Gr9a) of Drosophila melanogaster (Fruit fly).